The sequence spans 812 residues: Phospholipase D alpha 1 (812 aa).

A C2 domain is found at 1–130; the sequence is MAQILLHGTL…LGGEEIDKWL (130 aa). D190 contributes to the Ca(2+) binding site. The 39-residue stretch at 330-368 folds into the PLD phosphodiesterase 1 domain; that stretch reads TMFTHHQKIVVVDHEMPNQGSQQRRIVSFIGGIDLCDGR. Residues H335, K337, and D342 contribute to the active site. H335 lines the a 1,2-diacyl-sn-glycero-3-phosphate pocket. Ca(2+) is bound by residues H374 and H408. 2 residues coordinate a 1,2-diacyl-sn-glycero-3-phosphate: Q524 and H663. One can recognise a PLD phosphodiesterase 2 domain in the interval 658-685; that stretch reads FMIYVHTKMMIVDDEYIIIGSANINQRS. Catalysis depends on residues H663, K665, and D670. E724 lines the Ca(2+) pocket.

Belongs to the phospholipase D family. C2-PLD subfamily. As to quaternary structure, monomer. Requires Ca(2+) as cofactor.

The catalysed reaction is a 1,2-diacyl-sn-glycero-3-phosphocholine + H2O = a 1,2-diacyl-sn-glycero-3-phosphate + choline + H(+). Hydrolyzes glycerol-phospholipids at the terminal phosphodiesteric bond. Plays an important role in various cellular processes. This chain is Phospholipase D alpha 1 (PLD1), found in Zea mays (Maize).